We begin with the raw amino-acid sequence, 572 residues long: Putative carbohydrate transport ATP-binding protein MPN_258 (572 aa).

ABC transporter domains are found at residues 6–253 and 327–572; these read FRME…MGKE and RFIR…LIMQ. Position 40–47 (40–47) interacts with ATP; it reads GENGAGKS.

The protein belongs to the ABC transporter superfamily.

It localises to the cell membrane. Functionally, part of the ABC transporter complex involved in carbohydrates import. Probably responsible for energy coupling to the transport system. The polypeptide is Putative carbohydrate transport ATP-binding protein MPN_258 (Mycoplasma pneumoniae (strain ATCC 29342 / M129 / Subtype 1) (Mycoplasmoides pneumoniae)).